The following is a 360-amino-acid chain: MKPTIISKLESLKERHEELEALLGEASVISDQDKFRAYSKEYAQLEDVVKCFARWNQLNSNMEEAQLLLDDPSMKEMAQEEIEACKTEIEQVEQQLQILLLPKDPNDEYNCYLEIRAGTGGDEAGIFAGDLFRMYSRYAESKRWKVEVLSANESEQGGYKEIIVKVNGEGVYGQLKFESGGHRVQRVPKTESQGRIHTSACTVAVMPELPESELPEINPSDLRIDTYRSSGAGGQHVNTTDSAVRITHIPTGIVVECQDERSQHKNKAKAMSVLASRIVQAEKERQEQAQADTRRNLLGSGDRSDKIRTYNYPQGRVTDHRINLTVYRLDEVMNGKIDELIQPIITEYQADQLAALSEQA.

Q235 bears the N5-methylglutamine mark. The span at 284 to 295 (ERQEQAQADTRR) shows a compositional bias: basic and acidic residues. Residues 284-309 (ERQEQAQADTRRNLLGSGDRSDKIRT) are disordered.

This sequence belongs to the prokaryotic/mitochondrial release factor family. Post-translationally, methylated by PrmC. Methylation increases the termination efficiency of RF1.

The protein resides in the cytoplasm. Functionally, peptide chain release factor 1 directs the termination of translation in response to the peptide chain termination codons UAG and UAA. This Pasteurella multocida (strain Pm70) protein is Peptide chain release factor 1 (prfA).